Reading from the N-terminus, the 248-residue chain is 14-3-3-like protein 1 (248 aa).

This sequence belongs to the 14-3-3 family. Interacts with daf-16 and sir-2.1. Interacts with atgl-1. Interacts with hcf-1.

It localises to the cytoplasm. The protein resides in the nucleus. Its function is as follows. Required to modulate lifespan, in concert with hcf-1, acting redundantly with 14-3-3-like protein ftt-2. In Caenorhabditis elegans, this protein is 14-3-3-like protein 1 (par-5).